We begin with the raw amino-acid sequence, 333 residues long: Biotin synthase (333 aa).

The 230-residue stretch at Phe54 to Arg283 folds into the Radical SAM core domain. The [4Fe-4S] cluster site is built by Cys72, Cys76, and Cys79. Residues Ser116, Cys148, Cys208, and Arg278 each coordinate [2Fe-2S] cluster.

It belongs to the radical SAM superfamily. Biotin synthase family. Homodimer. Requires [4Fe-4S] cluster as cofactor. [2Fe-2S] cluster serves as cofactor.

The catalysed reaction is (4R,5S)-dethiobiotin + (sulfur carrier)-SH + 2 reduced [2Fe-2S]-[ferredoxin] + 2 S-adenosyl-L-methionine = (sulfur carrier)-H + biotin + 2 5'-deoxyadenosine + 2 L-methionine + 2 oxidized [2Fe-2S]-[ferredoxin]. It participates in cofactor biosynthesis; biotin biosynthesis; biotin from 7,8-diaminononanoate: step 2/2. In terms of biological role, catalyzes the conversion of dethiobiotin (DTB) to biotin by the insertion of a sulfur atom into dethiobiotin via a radical-based mechanism. The sequence is that of Biotin synthase from Brachyspira hyodysenteriae (strain ATCC 49526 / WA1).